We begin with the raw amino-acid sequence, 86 residues long: Triple QxxK/R motif-containing protein (86 aa).

Residues valine 51–leucine 71 form a helical membrane-spanning segment.

Belongs to the TRIQK family.

The protein resides in the endoplasmic reticulum membrane. May play a role in cell growth and maintenance of cell morphology. The polypeptide is Triple QxxK/R motif-containing protein (TRIQK) (Homo sapiens (Human)).